The chain runs to 160 residues: Major strawberry allergen Fra a 1-A (160 aa).

Belongs to the BetVI family. As to quaternary structure, monomer.

Its function is as follows. May be involved in ripening of fruits. The protein is Major strawberry allergen Fra a 1-A of Fragaria ananassa (Strawberry).